An 89-amino-acid chain; its full sequence is Small ribosomal subunit protein uS15 (89 aa).

The protein belongs to the universal ribosomal protein uS15 family. In terms of assembly, part of the 30S ribosomal subunit. Forms a bridge to the 50S subunit in the 70S ribosome, contacting the 23S rRNA.

One of the primary rRNA binding proteins, it binds directly to 16S rRNA where it helps nucleate assembly of the platform of the 30S subunit by binding and bridging several RNA helices of the 16S rRNA. Its function is as follows. Forms an intersubunit bridge (bridge B4) with the 23S rRNA of the 50S subunit in the ribosome. The polypeptide is Small ribosomal subunit protein uS15 (Roseobacter denitrificans (strain ATCC 33942 / OCh 114) (Erythrobacter sp. (strain OCh 114))).